The following is a 222-amino-acid chain: MISKDKLKKLVGWEALKYIKSNTIIGVGTGSTVNYFIEALSSIKQQIEGVVSSSQHSSNQLKKLGIPLYNLNNLNDLEIYIDSADEIDLHMQMIKGGGGALTKEKIIAFAAKKFICIVDDSKQVNILGRKGPIPVEVIPMARSVVSKSLICLGGLPEYRNGVITDNGNSILDVYNMNITDASLLEQRINNIPGVVSVGLFAQRKADIALIGTQKGIKILNSN.

Substrate is bound by residues 29-32 (TGST), 82-85 (DSAD), and 95-98 (KGGG). Catalysis depends on glutamate 104, which acts as the Proton acceptor. Lysine 122 contacts substrate.

The protein belongs to the ribose 5-phosphate isomerase family. Homodimer.

It catalyses the reaction aldehydo-D-ribose 5-phosphate = D-ribulose 5-phosphate. Its pathway is carbohydrate degradation; pentose phosphate pathway; D-ribose 5-phosphate from D-ribulose 5-phosphate (non-oxidative stage): step 1/1. In terms of biological role, catalyzes the reversible conversion of ribose-5-phosphate to ribulose 5-phosphate. The sequence is that of Ribose-5-phosphate isomerase A from Blochmanniella floridana.